Reading from the N-terminus, the 191-residue chain is Fe/S biogenesis protein NfuA (191 aa).

[4Fe-4S] cluster is bound by residues Cys149 and Cys152.

This sequence belongs to the NfuA family. Homodimer. [4Fe-4S] cluster is required as a cofactor.

In terms of biological role, involved in iron-sulfur cluster biogenesis. Binds a 4Fe-4S cluster, can transfer this cluster to apoproteins, and thereby intervenes in the maturation of Fe/S proteins. Could also act as a scaffold/chaperone for damaged Fe/S proteins. The polypeptide is Fe/S biogenesis protein NfuA (Yersinia enterocolitica serotype O:8 / biotype 1B (strain NCTC 13174 / 8081)).